Here is a 1277-residue protein sequence, read N- to C-terminus: Membrane-associated guanylate kinase, WW and PDZ domain-containing protein 2 (1277 aa).

The region spanning 17-101 (ESVIGRNPEG…PLRLKCVKQG (85 aa)) is the PDZ domain. One can recognise a Guanylate kinase-like domain in the interval 109-283 (RHYLNLRFQK…APVYSQPEEL (175 aa)). The segment at 205-308 (PGATPSAEGK…EDSDPLPDNW (104 aa)) is disordered. The span at 281–296 (EELKDQMDDTKSTKPE) shows a compositional bias: basic and acidic residues. 2 WW domains span residues 302 to 335 (DPLPDNWEMAYTEKGEVYFIDHNTKTTSWLDPRL) and 348 to 381 (NELPYGWEKIDDPIYGTYYVDHINRRTQFENPVL). An interaction with DDN region spans residues 302–381 (DPLPDNWEMA…RRTQFENPVL (80 aa)). The residue at position 362 (Y362) is a Phosphotyrosine. One can recognise a PDZ 1 domain in the interval 426 to 510 (STTLKKSNMG…SVNLVLCRGY (85 aa)). Positions 556–575 (QSVPDITDRPPHSLHSMPAD) are disordered. Residues 605 to 683 (TLTIVKGAKG…ETSLIIHRGG (79 aa)) enclose the PDZ 2 domain. A Phosphoserine modification is found at S686. One can recognise a PDZ 3 domain in the interval 778-860 (DVHLRRMESG…NGQVNLTVRR (83 aa)). Y827 bears the Phosphotyrosine mark. Residues 869–913 (CPENGRSPGSVSTHHSSPRSDYATYANSNHAAPSNNASPPEGFAS) form a disordered region. S884 and S885 each carry phosphoserine. Low complexity predominate over residues 894–908 (ANSNHAAPSNNASPP). Positions 920-1010 (DVIIHRKENE…SVTLRIIPQE (91 aa)) constitute a PDZ 4 domain. Residues 1011-1042 (ELNNPTSAPSSEKQSPMAQQHSPLAQQHSPLA) are compositionally biased toward polar residues. The disordered stretch occupies residues 1011–1130 (ELNNPTSAPS…PDTRQYPLSD (120 aa)). The span at 1069–1085 (NSYRSEVKARQDVKPDI) shows a compositional bias: basic and acidic residues. Residues 1141 to 1223 (TVDMEKGAKG…RVRLLLKRGT (83 aa)) form the PDZ 5 domain.

The protein belongs to the MAGUK family. As to quaternary structure, interacts (via its WW domains) with DRPLA. Interacts with CTNNB1, ACVR2A, SMAD2 and SMAD3. Part of a complex consisting of MAGI2/ARIP1, ACVR2A, ACVR1B and SMAD3. May interact with HTR2A and IGSF9. Interacts with HTR4. Interacts (via guanylate kinase domain) with DLGAP1. Interacts (via PDZ domains) with GRIN2A, GRID2 and NLGN1. Interacts with CTNND2. Interacts with MAGUIN-1. Interacts (via its second PDZ domain) with PTEN (via unphosphorylated C-terminus); this interaction diminishes the degradation rate of PTEN. Found in a complex, at least composed of KIDINS220, MAGI2, NTRK1 and RAPGEF2; the complex is mainly formed at late endosomes in a NGF-dependent manner. Interacts with RAPGEF2; the interaction occurs before or after nerve growth factor (NGF) stimulation. Isoform 1 interacts (via PDZ domain) with KIDINS220 isoform 2 (via C-terminal domain). Interacts with DDN. Identified in a complex with ACTN4, CASK, IQGAP1, NPHS1, SPTAN1 and SPTBN1. Interacts with DLL1. Found in a complex with IGSF9B and NLGN2; the interaction with IGSF9B is mediated via the PDZ 5 and PDZ 6 domains, while the interaction with NLGN2 is mediated via the WW1, WW2 and PDZ2 domains. Interacts (via PDZ 6 domain) with USH1G (via SAM domain); the interaction is triggered by phosphorylation of USH1G by CK2 and negatively regulates MAGI2-mediated endocytosis. As to expression, expressed in the foot process layer of podocytes of the kidney glomeruli but not in tubules (at protein level). Expressed in the brain.

The protein localises to the cytoplasm. Its subcellular location is the late endosome. It is found in the synapse. The protein resides in the synaptosome. It localises to the cell membrane. The protein localises to the cytoskeleton. Its subcellular location is the microtubule organizing center. It is found in the centrosome. The protein resides in the cell projection. It localises to the cilium. The protein localises to the centriole. Its subcellular location is the photoreceptor inner segment. It is found in the photoreceptor outer segment. In terms of biological role, seems to act as scaffold molecule at synaptic junctions by assembling neurotransmitter receptors and cell adhesion proteins. Plays a role in nerve growth factor (NGF)-induced recruitment of RAPGEF2 to late endosomes and neurite outgrowth. May play a role in regulating activin-mediated signaling in neuronal cells. Enhances the ability of PTEN to suppress AKT1 activation. Plays a role in receptor-mediated clathrin-dependent endocytosis which is required for ciliogenesis. This Rattus norvegicus (Rat) protein is Membrane-associated guanylate kinase, WW and PDZ domain-containing protein 2 (Magi2).